The chain runs to 181 residues: Peptidyl-tRNA hydrolase (181 aa).

A tRNA-binding site is contributed by tyrosine 14. Histidine 19 functions as the Proton acceptor in the catalytic mechanism. 3 residues coordinate tRNA: tyrosine 62, asparagine 64, and asparagine 108.

It belongs to the PTH family. In terms of assembly, monomer.

The protein resides in the cytoplasm. The enzyme catalyses an N-acyl-L-alpha-aminoacyl-tRNA + H2O = an N-acyl-L-amino acid + a tRNA + H(+). In terms of biological role, hydrolyzes ribosome-free peptidyl-tRNAs (with 1 or more amino acids incorporated), which drop off the ribosome during protein synthesis, or as a result of ribosome stalling. Catalyzes the release of premature peptidyl moieties from peptidyl-tRNA molecules trapped in stalled 50S ribosomal subunits, and thus maintains levels of free tRNAs and 50S ribosomes. In Campylobacter jejuni subsp. jejuni serotype O:23/36 (strain 81-176), this protein is Peptidyl-tRNA hydrolase.